The following is a 356-amino-acid chain: 7,8-didemethyl-8-hydroxy-5-deazariboflavin synthase (356 aa).

The Radical SAM core domain occupies 40–280 (ITYSKNVFIP…KDISIQVPPN (241 aa)). 3 residues coordinate [4Fe-4S] cluster: Cys54, Cys58, and Cys61.

This sequence belongs to the radical SAM superfamily. CofG family. Consists of two subunits, CofG and CofH. [4Fe-4S] cluster is required as a cofactor.

It catalyses the reaction 5-amino-5-(4-hydroxybenzyl)-6-(D-ribitylimino)-5,6-dihydrouracil + S-adenosyl-L-methionine = 7,8-didemethyl-8-hydroxy-5-deazariboflavin + 5'-deoxyadenosine + L-methionine + NH4(+) + H(+). The protein operates within cofactor biosynthesis; coenzyme F0 biosynthesis. Its function is as follows. Catalyzes the radical-mediated synthesis of 7,8-didemethyl-8-hydroxy-5-deazariboflavin from 5-amino-5-(4-hydroxybenzyl)-6-(D-ribitylimino)-5,6-dihydrouracil. This chain is 7,8-didemethyl-8-hydroxy-5-deazariboflavin synthase, found in Methanococcus aeolicus (strain ATCC BAA-1280 / DSM 17508 / OCM 812 / Nankai-3).